We begin with the raw amino-acid sequence, 309 residues long: Protein FdhE homolog (309 aa).

Belongs to the FdhE family.

The protein localises to the cytoplasm. Functionally, necessary for formate dehydrogenase activity. In Pectobacterium atrosepticum (strain SCRI 1043 / ATCC BAA-672) (Erwinia carotovora subsp. atroseptica), this protein is Protein FdhE homolog.